The chain runs to 114 residues: Ig heavy chain V region GOM (114 aa).

Positions 1 to 112 (EVQLVESGGD…YWGQGTLVTV (112 aa)) constitute an Ig-like domain.

This is Ig heavy chain V region GOM from Canis lupus familiaris (Dog).